The following is a 186-amino-acid chain: MNDCSRCAGSTSSGPAHWSGRIRDIADFPKPGIVFKDITPLLSDGPDFASALDEMAQPWRTTPLDAVLGIEARGFILGAALARELRTGFVPVRKPGKLPGRTLIQEYALEYGTDRIEMHEDALPRGARVLIVDDVLATGGTLRAALGLAAQLELEIVGAAVLVELLALQGRSKWLNDVPLLATLSY.

It belongs to the purine/pyrimidine phosphoribosyltransferase family. As to quaternary structure, homodimer.

The protein resides in the cytoplasm. The catalysed reaction is AMP + diphosphate = 5-phospho-alpha-D-ribose 1-diphosphate + adenine. It participates in purine metabolism; AMP biosynthesis via salvage pathway; AMP from adenine: step 1/1. Functionally, catalyzes a salvage reaction resulting in the formation of AMP, that is energically less costly than de novo synthesis. In Xanthomonas campestris pv. campestris (strain 8004), this protein is Adenine phosphoribosyltransferase.